A 452-amino-acid chain; its full sequence is Cobyrinate a,c-diamide synthase (452 aa).

In terms of domain architecture, GATase cobBQ-type spans 248–441; it reads RVAYALDAAF…LHIHFYQNLA (194 aa). Catalysis depends on Cys330, which acts as the Nucleophile.

It belongs to the CobB/CbiA family. The cofactor is Mg(2+).

The catalysed reaction is cob(II)yrinate + 2 L-glutamine + 2 ATP + 2 H2O = cob(II)yrinate a,c diamide + 2 L-glutamate + 2 ADP + 2 phosphate + 2 H(+). It functions in the pathway cofactor biosynthesis; adenosylcobalamin biosynthesis; cob(II)yrinate a,c-diamide from sirohydrochlorin (anaerobic route): step 10/10. Functionally, catalyzes the ATP-dependent amidation of the two carboxylate groups at positions a and c of cobyrinate, using either L-glutamine or ammonia as the nitrogen source. The sequence is that of Cobyrinate a,c-diamide synthase from Listeria monocytogenes serovar 1/2a (strain ATCC BAA-679 / EGD-e).